Reading from the N-terminus, the 308-residue chain is uncharacterized protein (308 aa).

Residues 1 to 18 (MKIILLFLAALASFTVHA) form the signal peptide.

This is an uncharacterized protein from Escherichia coli (strain K12).